The sequence spans 96 residues: ATP-dependent Clp protease adapter protein ClpS (96 aa).

The protein belongs to the ClpS family. As to quaternary structure, binds to the N-terminal domain of the chaperone ClpA.

Its function is as follows. Involved in the modulation of the specificity of the ClpAP-mediated ATP-dependent protein degradation. This is ATP-dependent Clp protease adapter protein ClpS from Streptomyces coelicolor (strain ATCC BAA-471 / A3(2) / M145).